The chain runs to 311 residues: Telomere-binding protein I1 homolog (311 aa).

Belongs to the chordopoxvirinae I1 family.

The protein resides in the virion. Its function is as follows. Late DNA-binding protein which binds to the hairpin form of the viral telomeric sequence. Required for the production of mature virions (MV). This Fowlpox virus (strain NVSL) (FPV) protein is Telomere-binding protein I1 homolog.